A 291-amino-acid polypeptide reads, in one-letter code: Nucleotide-binding protein Ccel_2290 (291 aa).

Residue 8 to 15 (GMSGAGKS) participates in ATP binding. GTP is bound at residue 59-62 (DIRG).

Belongs to the RapZ-like family.

Its function is as follows. Displays ATPase and GTPase activities. In Ruminiclostridium cellulolyticum (strain ATCC 35319 / DSM 5812 / JCM 6584 / H10) (Clostridium cellulolyticum), this protein is Nucleotide-binding protein Ccel_2290.